The sequence spans 757 residues: Elongation factor G, mitochondrial (757 aa).

Residues 1–41 (MLERAALLHRLRLPAHSLPFIYNGALFGGAKRSFSATSKRC) constitute a mitochondrion transit peptide. A tr-type G domain is found at 66 to 347 (KLLRNIGVSA…AIVDYLPEPS (282 aa)). GTP is bound by residues 75–82 (AHIDSGKT), 146–150 (DTPGH), and 200–203 (NKMD).

This sequence belongs to the TRAFAC class translation factor GTPase superfamily. Classic translation factor GTPase family. EF-G/EF-2 subfamily.

It localises to the mitochondrion. Its pathway is protein biosynthesis; polypeptide chain elongation. Mitochondrial GTPase that catalyzes the GTP-dependent ribosomal translocation step during translation elongation. During this step, the ribosome changes from the pre-translocational (PRE) to the post-translocational (POST) state as the newly formed A-site-bound peptidyl-tRNA and P-site-bound deacylated tRNA move to the P and E sites, respectively. Catalyzes the coordinated movement of the two tRNA molecules, the mRNA and conformational changes in the ribosome. The polypeptide is Elongation factor G, mitochondrial (Eremothecium gossypii (strain ATCC 10895 / CBS 109.51 / FGSC 9923 / NRRL Y-1056) (Yeast)).